The following is a 95-amino-acid chain: Integration host factor subunit beta (95 aa).

The protein belongs to the bacterial histone-like protein family. As to quaternary structure, heterodimer of an alpha and a beta chain.

Functionally, this protein is one of the two subunits of integration host factor, a specific DNA-binding protein that functions in genetic recombination as well as in transcriptional and translational control. The chain is Integration host factor subunit beta from Colwellia psychrerythraea (strain 34H / ATCC BAA-681) (Vibrio psychroerythus).